Here is a 181-residue protein sequence, read N- to C-terminus: Protein Syd (181 aa).

It belongs to the Syd family.

It localises to the cell inner membrane. Interacts with the SecY protein in vivo. May bind preferentially to an uncomplexed state of SecY, thus functioning either as a chelating agent for excess SecY in the cell or as a regulatory factor that negatively controls the translocase function. In Escherichia coli O157:H7, this protein is Protein Syd.